We begin with the raw amino-acid sequence, 231 residues long: GrpE protein homolog, mitochondrial (231 aa).

Residues 49–71 (SEKAGEKAEEKAEEQNLSAEEQK) are disordered.

It belongs to the GrpE family. Component of the PAM complex, at least composed of mtHsp70, MGE1, TIM44, PAM16, PAM17 and PAM18.

It is found in the mitochondrion matrix. Its function is as follows. Essential component of the PAM complex, a complex required for the translocation of transit peptide-containing proteins from the inner membrane into the mitochondrial matrix in an ATP-dependent manner. Seems to control the nucleotide-dependent binding of SSC1 to substrate proteins. In Candida glabrata (strain ATCC 2001 / BCRC 20586 / JCM 3761 / NBRC 0622 / NRRL Y-65 / CBS 138) (Yeast), this protein is GrpE protein homolog, mitochondrial (mge1).